Here is a 232-residue protein sequence, read N- to C-terminus: Large ribosomal subunit protein uL1 (232 aa).

This sequence belongs to the universal ribosomal protein uL1 family. As to quaternary structure, part of the 50S ribosomal subunit.

In terms of biological role, binds directly to 23S rRNA. The L1 stalk is quite mobile in the ribosome, and is involved in E site tRNA release. Protein L1 is also a translational repressor protein, it controls the translation of the L11 operon by binding to its mRNA. The sequence is that of Large ribosomal subunit protein uL1 from Ruegeria sp. (strain TM1040) (Silicibacter sp.).